A 507-amino-acid chain; its full sequence is FAD-linked oxidoreductase OXR1 (507 aa).

The first 21 residues, 1–21, serve as a signal peptide directing secretion; that stretch reads MTIKFASLILAGLGLGSGALG. N-linked (GlcNAc...) asparagine glycosylation is found at Asn34 and Asn65. The FAD-binding PCMH-type domain maps to 73 to 245; it reads YAPPTFKVSV…VSATYKLKPL (173 aa). 2 N-linked (GlcNAc...) asparagine glycosylation sites follow: Asn263 and Asn288.

The protein belongs to the oxygen-dependent FAD-linked oxidoreductase family. Requires FAD as cofactor.

The enzyme catalyses dihydropyriculol + A = pyriculol + AH2. The catalysed reaction is dihydropyriculariol + A = pyriculariol + AH2. The protein operates within polyketide biosynthesis. In terms of biological role, FAD-linked oxidoreductase; part of the gene cluster that mediates the biosynthesis of pyriculol and pyriculariol, two heptaketides that induce lesion formation upon application on rice leaves but are dispensable for pathogenicity. The highly reducing polyketide synthase synthesizes the heptaketide backbone of pyriculol and pyriculariol. Pyriculol and pyriculariol contain several hydroxyl moieties and double bonds, so it can be assumed that several reduction steps occur during biosynthesis. These reactions could be executed by PKS19 itself or partly by the tailoring enzymes OXR1, OXR2, RED1, RED2 or RED3, identified within the cluster. The FAD-linked oxidoreductase OXR1 is the only tailoring enzyme for which the function has been determined yet, and is involved in the oxidation of dihydropyriculol and dihydropyriculariol into pyriculol and pyriculariol, respectively. The protein is FAD-linked oxidoreductase OXR1 of Pyricularia oryzae (strain 70-15 / ATCC MYA-4617 / FGSC 8958) (Rice blast fungus).